Consider the following 227-residue polypeptide: Zinc finger protein ZAT10 (227 aa).

The C2H2-type 1 zinc-finger motif lies at Y80–H102. The interval G96 to V128 is disordered. Positions T119–V128 are enriched in low complexity. The C2H2-type 2 zinc-finger motif lies at H136–H158. A disordered region spans residues S168 to F189. The span at E174–H186 shows a compositional bias: polar residues.

In terms of tissue distribution, expressed in roots, stems and leaves.

The protein localises to the nucleus. In terms of biological role, transcriptional repressor involved in abiotic stress responses. Can repress the stress responsive genes DREB1A and LTI78. Probably involved in jasmonate (JA) early signaling response. May regulate the expression of the JA biosynthesis gene LOX3 and control the expression of TIFY10A/JAZ1, a key repressor in the JA signaling cascade. The chain is Zinc finger protein ZAT10 (ZAT10) from Arabidopsis thaliana (Mouse-ear cress).